The sequence spans 162 residues: Onchocystatin (162 aa).

Positions 1-32 are cleaved as a signal peptide; that stretch reads MLTIKDGTLLIHLLLFSVVALVQLQGAKSARA. Residues 30–54 form a disordered region; it reads ARAKNPSKMESKTGENQDRPVLLGG. The segment covering 36-47 has biased composition (basic and acidic residues); that stretch reads SKMESKTGENQD. A Secondary area of contact motif is present at residues 97-101; it reads QVVAG. A disulfide bridge connects residues Cys115 and Cys128.

The protein belongs to the cystatin family. Expressed in the cuticle of L3 and L4 larvae, female adult, and in the eggshell of developing microfilariae.

In terms of biological role, cysteine protease inhibitor which inhibits members of the peptidase C1 family. In the human host, inhibits CTSL/cathepsin L and CTSS/cathepsin S and to a lesser extent CTSB/cathepsin B which may cause defects in antigen processing and thereby impair antigen-driven T cell proliferation. This is Onchocystatin from Onchocerca volvulus.